Reading from the N-terminus, the 209-residue chain is MADSKEIKRVLLGPLLDNNPIALQVLGICSALAVTTKLETALVMTIAVTLVTAFSSFFISLIRHYIPGSVRIIVQMAIIASLVIVVDQILQAYAYEISKQLSVFVGLIITNCIVMGRAEAYAMKSPPIESFMDGIGNGLGYGVILVLVGFLRELFGSGKLFGITVMESVQNGGWYQPNGLFLLAPSAFFIIGMLIWGLRTLKPAQVEKE.

5 consecutive transmembrane segments (helical) span residues 42 to 62, 72 to 92, 103 to 123, 131 to 151, and 178 to 198; these read LVMTIAVTLVTAFSSFFISLI, IIVQMAIIASLVIVVDQILQA, VFVGLIITNCIVMGRAEAYAM, FMDGIGNGLGYGVILVLVGFL, and NGLFLLAPSAFFIIGMLIWGL.

The protein belongs to the NqrDE/RnfAE family. As to quaternary structure, composed of six subunits; NqrA, NqrB, NqrC, NqrD, NqrE and NqrF.

It is found in the cell inner membrane. The catalysed reaction is a ubiquinone + n Na(+)(in) + NADH + H(+) = a ubiquinol + n Na(+)(out) + NAD(+). Its function is as follows. NQR complex catalyzes the reduction of ubiquinone-1 to ubiquinol by two successive reactions, coupled with the transport of Na(+) ions from the cytoplasm to the periplasm. NqrA to NqrE are probably involved in the second step, the conversion of ubisemiquinone to ubiquinol. The chain is Na(+)-translocating NADH-quinone reductase subunit D from Photorhabdus laumondii subsp. laumondii (strain DSM 15139 / CIP 105565 / TT01) (Photorhabdus luminescens subsp. laumondii).